The sequence spans 259 residues: MSKYKLIMLRHGEGAWNKENRFCSWVDQKLNSEGMEEARNCGKQLKALNFEFDLVFTSVLNRSIHTAWLILEELGQEWVPVESSWRLNERHYGALIGLNREQMALNHGEEQVRLWRRSYNVTPPPIEESHPYYQEIYNDRRYKVCDVPLDQLPRSESLKDVLERLLPYWNERIAPEVLRGKTILISAHGNSSRALLKHLEGISDEDIINITLPTGVPILLELDENLRAVGPHQFLGDQEAIQAAIKKVEDQGKVKQAKK.

An N-acetylserine modification is found at Ser-2. N-linked (Glc) (glycation) lysine; in vitro glycans are attached at residues Lys-3 and Lys-5. Arg-10–Asn-17 provides a ligand contact to substrate. His-11 serves as the catalytic Tele-phosphohistidine intermediate. N-linked (Glc) (glycation) lysine; in vitro glycosylation occurs at Lys-18. Cys-23 to Ser-24 is a substrate binding site. N-linked (Glc) (glycation) lysine; in vitro glycosylation is present at Lys-43. Residues Arg-62, Glu-89–Tyr-92, Arg-100, and Arg-116–Arg-117 each bind substrate. Glu-89 acts as the Proton donor/acceptor in catalysis. Residue Thr-122 is modified to Phosphothreonine. Residue Lys-159 is glycosylated (N-linked (Glc) (glycation) lysine). Gly-189 to Asn-190 lines the substrate pocket. Lys-197 carries N-linked (Glc) (glycation) lysine; in vitro glycosylation.

The protein belongs to the phosphoglycerate mutase family. BPG-dependent PGAM subfamily. As to quaternary structure, homodimer. In terms of processing, glycation of Lys-159 in diabetic patients inactivates the enzyme. Expressed in red blood cells. Expressed in non-erythroid cells of the placenta; present in the syncytiotrophoblast layer of the placental villi at the feto-maternal interface (at protein level).

It catalyses the reaction (2R)-3-phospho-glyceroyl phosphate = (2R)-2,3-bisphosphoglycerate + H(+). The catalysed reaction is (2R)-2-phosphoglycerate = (2R)-3-phosphoglycerate. With respect to regulation, at alkaline pH BPGM favors the synthase reaction; however, at lower pH the phosphatase reaction is dominant. Inhibited by citrate. Plays a major role in regulating hemoglobin oxygen affinity by controlling the levels of its allosteric effector 2,3-bisphosphoglycerate (2,3-BPG). Also exhibits mutase (EC 5.4.2.11) activity. This Homo sapiens (Human) protein is Bisphosphoglycerate mutase (BPGM).